The primary structure comprises 116 residues: Iron-sulfur cluster insertion protein ErpA (116 aa).

Residues C44, C108, and C110 each contribute to the iron-sulfur cluster site.

Belongs to the HesB/IscA family. As to quaternary structure, homodimer. Requires iron-sulfur cluster as cofactor.

In terms of biological role, required for insertion of 4Fe-4S clusters for at least IspG. The protein is Iron-sulfur cluster insertion protein ErpA of Pseudomonas aeruginosa (strain LESB58).